A 537-amino-acid polypeptide reads, in one-letter code: Chaperonin GroEL 2 (537 aa).

ATP-binding positions include 29 to 32 (TLGP), 86 to 90 (DGTTT), Gly-413, 477 to 479 (NAA), and Asp-493.

Belongs to the chaperonin (HSP60) family. In terms of assembly, forms a cylinder of 14 subunits composed of two heptameric rings stacked back-to-back. Interacts with the co-chaperonin GroES.

The protein localises to the cytoplasm. It catalyses the reaction ATP + H2O + a folded polypeptide = ADP + phosphate + an unfolded polypeptide.. Together with its co-chaperonin GroES, plays an essential role in assisting protein folding. The GroEL-GroES system forms a nano-cage that allows encapsulation of the non-native substrate proteins and provides a physical environment optimized to promote and accelerate protein folding. The protein is Chaperonin GroEL 2 of Thermobifida fusca (strain YX).